We begin with the raw amino-acid sequence, 170 residues long: Peptide deformylase (170 aa).

The Fe cation site is built by Cys-92 and His-134. Glu-135 is an active-site residue. Residue His-138 coordinates Fe cation.

This sequence belongs to the polypeptide deformylase family. It depends on Fe(2+) as a cofactor.

The catalysed reaction is N-terminal N-formyl-L-methionyl-[peptide] + H2O = N-terminal L-methionyl-[peptide] + formate. Removes the formyl group from the N-terminal Met of newly synthesized proteins. Requires at least a dipeptide for an efficient rate of reaction. N-terminal L-methionine is a prerequisite for activity but the enzyme has broad specificity at other positions. The protein is Peptide deformylase of Chromohalobacter salexigens (strain ATCC BAA-138 / DSM 3043 / CIP 106854 / NCIMB 13768 / 1H11).